The sequence spans 209 residues: V-type ATP synthase subunit D 2 (209 aa).

It belongs to the V-ATPase D subunit family.

Its function is as follows. Produces ATP from ADP in the presence of a proton gradient across the membrane. The protein is V-type ATP synthase subunit D 2 (atpD2) of Treponema pallidum (strain Nichols).